A 1333-amino-acid chain; its full sequence is NPC1-like intracellular cholesterol transporter 1 (1333 aa).

Positions 1-20 (MAAAWQGWLLWALLLNSAQG) are cleaved as a signal peptide. Residues 21–284 (ELYTPTHKAG…SFYMGRMPGW (264 aa)) lie on the Extracellular side of the membrane. 9 disulfide bridges follow: Cys-32–Cys-90, Cys-38–Cys-56, Cys-77–Cys-125, Cys-91–Cys-129, Cys-113–Cys-254, Cys-116–Cys-172, Cys-189–Cys-197, Cys-243–Cys-259, and Cys-256–Cys-263. Residues 285 to 305 (LALIIIFTAVFVLLSVVLVYL) form a helical membrane-spanning segment. At 306-352 (RVASNRNKNKTAGSQEAPNLPRKRRFSPHTVLGRFFESWGTRVASWP) the chain is on the cytoplasmic side. Residues 353–373 (LTVLALSFIVVIALSVGLTFI) traverse the membrane as a helical segment. Topologically, residues 374–632 (ELTTDPVELW…DEINRTTIQD (259 aa)) are extracellular. Disulfide bonds link Cys-471/Cys-485 and Cys-525/Cys-542. The SSD domain occupies 632 to 797 (DLPVFAISYL…MTAFVALLSL (166 aa)). A helical membrane pass occupies residues 633 to 653 (LPVFAISYLIVFLYISLALGS). The Cytoplasmic segment spans residues 654–665 (YSRWSRVAVDSK). The chain crosses the membrane as a helical span at residues 666–686 (ATLGLGGVAVVLGAVVAAMGF). Over 687 to 696 (YSYLGVPSSL) the chain is Extracellular. A helical membrane pass occupies residues 697-717 (VIIQVVPFLVLAVGADNIFIF). The Cytoplasmic portion of the chain corresponds to 718–742 (VLEYQRLPRMPGEQREAHIGRTLGS). Residues 743 to 763 (VAPSMLLCSLSEAICFFLGAL) traverse the membrane as a helical segment. The Extracellular portion of the chain corresponds to 764–776 (TSMPAVRTFALTS). A helical transmembrane segment spans residues 777–797 (GLAIIFDFLLQMTAFVALLSL). At 798–846 (DSKRQEASRPDVVCCFSSRNLPPPKQKEGLLLCFFRKIYTPFLLHRFIR) the chain is on the cytoplasmic side. Residues 847-867 (PVVLLLFLVLFGANLYLMCNI) form a helical membrane-spanning segment. At 868 to 1113 (SVGLDQDLAL…QQYLTVLPEG (246 aa)) the chain is on the extracellular side. 3 disulfide bridges follow: Cys-920/Cys-925, Cys-967/Cys-1025, and Cys-981/Cys-990. Residues 1114–1134 (IFTLALCFVPTFVVCYLLLGL) form a helical membrane-spanning segment. Over 1135–1142 (DIRSGILN) the chain is Cytoplasmic. A helical membrane pass occupies residues 1143 to 1163 (LLSIIMILVDTIGLMAVWGIS). Over 1164–1165 (YN) the chain is Extracellular. A helical transmembrane segment spans residues 1166–1186 (AVSLINLVTAVGMSVEFVSHI). Topologically, residues 1187–1206 (TRSFAVSTKPTRLERAKDAT) are cytoplasmic. A helical transmembrane segment spans residues 1207–1227 (IFMGSAVFAGVAMTNFPGILI). Topologically, residues 1228–1242 (LGFAQAQLIQIFFFR) are extracellular. Residues 1243-1263 (LNLLITLLGLLHGLVFLPVVL) traverse the membrane as a helical segment. Topologically, residues 1264 to 1333 (SYLGPDVNQA…SSLPKSDQKF (70 aa)) are cytoplasmic.

It belongs to the patched family. Interacts with RAB11A, MYO5B and RAB11FIP2. Interaction with RAB11A, MYO5B and RAB11FIP2 is required for proper transport to the plasma membrane upon cholesterol depletion. Interacts with NPC2. Interacts with LIMA1. Highly glycosylated. In terms of tissue distribution, expressed in small intestine, stomach and muscle, along with detectable expression in lung, heart, gall bladder, brain, testis, skin and liver. Expression in liver is extremely low.

It is found in the apical cell membrane. The protein localises to the cell membrane. It catalyses the reaction cholesterol(in) = cholesterol(out). The catalysed reaction is sitosterol(out) = sitosterol(in). Its function is as follows. Plays a major role in cholesterol homeostasis. Critical for the uptake of cholesterol across the plasma membrane of the intestinal enterocyte. Involved in plant sterol absorption, it transports sitosterol, although at lower rates than cholesterol. May have a function in the transport of multiple lipids and their homeostasis, thereby influencing lipid metabolism regulation. May be involved in caveolin trafficking from the plasma membrane. Acts as a negative regulator of NPC2 and down-regulates its expression and secretion by inhibiting its maturation and accelerating its degradation. This chain is NPC1-like intracellular cholesterol transporter 1, found in Mus musculus (Mouse).